The chain runs to 375 residues: DNA replication and repair protein RecF (375 aa).

30 to 37 (GNNAQGKS) contributes to the ATP binding site.

This sequence belongs to the RecF family.

The protein localises to the cytoplasm. The RecF protein is involved in DNA metabolism; it is required for DNA replication and normal SOS inducibility. RecF binds preferentially to single-stranded, linear DNA. It also seems to bind ATP. This is DNA replication and repair protein RecF from Microcystis aeruginosa (strain NIES-843 / IAM M-2473).